A 153-amino-acid chain; its full sequence is UPF0260 protein YcgN (153 aa).

Belongs to the UPF0260 family.

The protein is UPF0260 protein YcgN of Shigella flexneri serotype 5b (strain 8401).